Reading from the N-terminus, the 75-residue chain is Movement protein TGBp3 (75 aa).

Residues M1–R2 lie on the Lumenal side of the membrane. Residues V3–V23 form a helical membrane-spanning segment. The Cytoplasmic segment spans residues S24 to W75.

This sequence belongs to the Tymovirales TGBp3 protein family.

It is found in the host endoplasmic reticulum membrane. Functionally, plays a role in viral cell-to-cell propagation, by facilitating genome transport to neighboring plant cells through plasmosdesmata. May induce the formation of granular vesicles derived from the Endoplasmic reticulum, which align on actin filaments. The chain is Movement protein TGBp3 from Strawberry mild yellow edge-associated virus (SMYEaV).